A 381-amino-acid polypeptide reads, in one-letter code: Spindlin interactor and repressor of chromatin-binding protein (381 aa).

The interval 42-73 is disordered; the sequence is RVTQQEKTPPPRPSPLEAGSDGCEEPKQQVSW. Lysine 48 is covalently cross-linked (Glycyl lysine isopeptide (Lys-Gly) (interchain with G-Cter in SUMO2)). Residues serine 121 and serine 148 each carry the phosphoserine modification. Disordered regions lie at residues 144 to 264, 283 to 320, and 339 to 381; these read AEQP…EVRH, QLRG…LRGT, and LQDW…GNGV. Residues lysine 189 and lysine 220 each participate in a glycyl lysine isopeptide (Lys-Gly) (interchain with G-Cter in SUMO2) cross-link. Residues 218-228 show a composition bias toward basic and acidic residues; that stretch reads RWKEPPGEEPV. Residues serine 248 and serine 251 each carry the phosphoserine modification. The segment covering 287–299 has biased composition (basic and acidic residues); it reads PDSKDSPKDREVA. Glycyl lysine isopeptide (Lys-Gly) (interchain with G-Cter in SUMO2) cross-links involve residues lysine 290 and lysine 294. Serine 308 and serine 310 each carry phosphoserine. A Glycyl lysine isopeptide (Lys-Gly) (interchain with G-Cter in SUMO2) cross-link involves residue lysine 374.

As to quaternary structure, interacts with SPIN1, SPIN2A, SPIN2B, SPIN3 and SPIN4. Interacts with TCF7L2 in a SPIN1-dependent manner. Interacts with PARP1; promoting PARP1 ADP-ribosyltransferase activity.

The protein resides in the nucleus. Its subcellular location is the chromosome. Chromatin protein that stabilizes SPIN1 and enhances its association with histone H3 trimethylated at both 'Lys-4' and 'Lys-9' (H3K4me3K9me3). Positively regulates poly-ADP-ribosylation in response to DNA damage; acts by facilitating PARP1 ADP-ribosyltransferase activity. The chain is Spindlin interactor and repressor of chromatin-binding protein from Homo sapiens (Human).